A 537-amino-acid polypeptide reads, in one-letter code: MPAKFIFVTGGVTSSLGKGITAASLGRLLKSRGLKVAIQKFDPYINIDPGTMSPYQHGEVFVTDDGAETDLDLGHYERFIDISLTKASNVTAGKVYWSVITKERRGDFLGGTVQVIPHITNEIKARLLRVAEESDPDVVITEIGGTVGDIESLPFLEAIRQMKSDIGRDRVLYIHVTLVPYLRAAGEAKTKPTQHSVKELRSIGIQPDIIVCRTERPFSREMEEKIALFCDIDPDAVIQAWDADSIYEVPLMMQEEGLDSIVVERLKLNCGPAQMDDWRAMVAKLKNITRHLEIALVGKYVTLPDAYLSVVESLRHAGMYHNVQVDIRWIYSADLERGGLEQLQDVAGILVPGGFGDRGVEGKIIAARYAREHGIPFLGICLGMQLAVVEFARHVCGLEAANSSEFNPETPHPVIDLLPEQKEIEDKGGTMRLGLYPCRLQPGTRAHQAYGEEIIYERHRHRYEFNNNYRAELTARGMVISGTSPDDRLVEIIELADHPWFVACQFHPEFKSRPNRPHPLFRDFIGAACRRAGGGAG.

Residues 1 to 268 (MPAKFIFVTG…DSIVVERLKL (268 aa)) form an amidoligase domain region. Position 14 (serine 14) interacts with CTP. Serine 14 is a UTP binding site. 15–20 (SLGKGI) provides a ligand contact to ATP. Tyrosine 55 is a binding site for L-glutamine. ATP is bound at residue aspartate 72. Mg(2+) contacts are provided by aspartate 72 and glutamate 142. CTP contacts are provided by residues 149 to 151 (DIE), 189 to 194 (KTKPTQ), and lysine 225. UTP is bound by residues 189–194 (KTKPTQ) and lysine 225. Residues 293–534 (EIALVGKYVT…IGAACRRAGG (242 aa)) enclose the Glutamine amidotransferase type-1 domain. Glycine 354 provides a ligand contact to L-glutamine. Cysteine 381 serves as the catalytic Nucleophile; for glutamine hydrolysis. L-glutamine-binding positions include 382–385 (LGMQ), glutamate 405, and arginine 462. Catalysis depends on residues histidine 507 and glutamate 509.

It belongs to the CTP synthase family. In terms of assembly, homotetramer.

It catalyses the reaction UTP + L-glutamine + ATP + H2O = CTP + L-glutamate + ADP + phosphate + 2 H(+). The catalysed reaction is L-glutamine + H2O = L-glutamate + NH4(+). It carries out the reaction UTP + NH4(+) + ATP = CTP + ADP + phosphate + 2 H(+). The protein operates within pyrimidine metabolism; CTP biosynthesis via de novo pathway; CTP from UDP: step 2/2. Allosterically activated by GTP, when glutamine is the substrate; GTP has no effect on the reaction when ammonia is the substrate. The allosteric effector GTP functions by stabilizing the protein conformation that binds the tetrahedral intermediate(s) formed during glutamine hydrolysis. Inhibited by the product CTP, via allosteric rather than competitive inhibition. In terms of biological role, catalyzes the ATP-dependent amination of UTP to CTP with either L-glutamine or ammonia as the source of nitrogen. Regulates intracellular CTP levels through interactions with the four ribonucleotide triphosphates. This Moorella thermoacetica (strain ATCC 39073 / JCM 9320) protein is CTP synthase.